A 204-amino-acid chain; its full sequence is Nascent polypeptide-associated complex subunit alpha-like protein 3 (204 aa).

Basic and acidic residues predominate over residues 1 to 23 (MTAEQKVELAAKLEEQKIDLDKP). Disordered regions lie at residues 1-68 (MTAE…AMLK) and 141-165 (GETS…EEGV). Residues 24-43 (EVEDDDDNDEDDSEDDDEAE) are compositionally biased toward acidic residues. Residue S36 is modified to Phosphoserine. Residues 44–59 (GHDGEAGGRSKQSRSE) show a composition bias toward basic and acidic residues. The region spanning 56–121 (SRSEKKSRKA…AKIEDLSSQL (66 aa)) is the NAC-A/B domain. Low complexity predominate over residues 141 to 152 (GETSSAATAAAV). The span at 153 to 164 (QDDDDEEVDEEG) shows a compositional bias: acidic residues. One can recognise a UBA domain in the interval 159 to 204 (EVDEEGVEPKDIELVMTQAGVSKPRAVKALKLANGDIVSAIMELTT).

The protein belongs to the NAC-alpha family.

Its function is as follows. May promote appropriate targeting of ribosome-nascent polypeptide complexes. This chain is Nascent polypeptide-associated complex subunit alpha-like protein 3, found in Arabidopsis thaliana (Mouse-ear cress).